A 193-amino-acid chain; its full sequence is A-type ATP synthase subunit E (193 aa).

This sequence belongs to the V-ATPase E subunit family. Has multiple subunits with at least A(3), B(3), C, D, E, F, H, I and proteolipid K(x).

It is found in the cell membrane. Its function is as follows. Component of the A-type ATP synthase that produces ATP from ADP in the presence of a proton gradient across the membrane. In Haloquadratum walsbyi (strain DSM 16790 / HBSQ001), this protein is A-type ATP synthase subunit E.